Here is a 380-residue protein sequence, read N- to C-terminus: MYG1 exonuclease (380 aa).

The transit peptide at Met-1–Ile-46 directs the protein to the mitochondrion. An N6-acetyllysine mark is found at Lys-266 and Lys-272.

It belongs to the MYG1 family. In terms of tissue distribution, ubiquitously expressed, with highest levels in testis.

It localises to the nucleus. The protein localises to the nucleoplasm. The protein resides in the mitochondrion matrix. It is found in the nucleolus. 3'-5' RNA exonuclease which cleaves in situ on specific transcripts in both nucleus and mitochondrion. Involved in regulating spatially segregated organellar RNA processing, acts as a coordinator of nucleo-mitochondrial crosstalk. In nucleolus, processes pre-ribosomal RNA involved in ribosome assembly and alters cytoplasmic translation. In mitochondrial matrix, processes 3'-termini of the mito-ribosomal and messenger RNAs and controls translation of mitochondrial proteins. The polypeptide is MYG1 exonuclease (Mus musculus (Mouse)).